The following is a 612-amino-acid chain: Protein MUK1 (612 aa).

Over residues glutamate 40 to cysteine 50 the composition is skewed to basic and acidic residues. A disordered region spans residues glutamate 40–lysine 66. Residues asparagine 55–lysine 66 show a composition bias toward polar residues. 4 positions are modified to phosphoserine: serine 67, serine 163, serine 185, and serine 245. Positions threonine 273–serine 414 constitute a VPS9 domain. Positions isoleucine 494–arginine 560 are disordered. A compositionally biased stretch (low complexity) spans asparagine 503–asparagine 517. Residues isoleucine 518–leucine 529 show a composition bias toward polar residues. The segment covering serine 530–serine 542 has biased composition (basic and acidic residues). The span at arginine 543–serine 554 shows a compositional bias: low complexity.

It localises to the cytoplasm. In terms of biological role, putative GTPase-activating protein. The protein is Protein MUK1 (MUK1) of Saccharomyces cerevisiae (strain ATCC 204508 / S288c) (Baker's yeast).